The sequence spans 1004 residues: ABC transporter G family member 25 (1004 aa).

The N-terminal stretch at 1–27 (MAASQLLAAAVAAAVFLAALLVPPARC) is a signal peptide. The helical transmembrane segment at 271–291 (ATALFGGILIVILSVVLLLVY) threads the bilayer. The tract at residues 343–373 (SDQLAASSNEARHATEGNGKRSKNRKKLAHA) is disordered. Basic and acidic residues predominate over residues 352-361 (EARHATEGNG). Positions 362–372 (KRSKNRKKLAH) are enriched in basic residues. An ABC transporter domain is found at 419 to 659 (VVFKGLTLSI…FSSLGIKVPE (241 aa)). 451 to 458 (GPSGAGKT) lines the ATP pocket. The next 6 helical transmembrane spans lie at 776–796 (ATLQAVDYLILCIAGICIGTI), 804–824 (FGVASYGYTIIAVSLLCQLAA), 886–906 (LVFLALVYCVTGIGYTFAIWF), 907–927 (ELGLAQLCSALIPVVLVLVGT), 943–963 (WALEALIIAGAKKYSGVWLIT), and 978–998 (FVLCIVIVMLMGVLFRFIALL).

The protein belongs to the ABC transporter superfamily. ABCG family. Eye pigment precursor importer (TC 3.A.1.204) subfamily.

The protein localises to the membrane. The sequence is that of ABC transporter G family member 25 from Oryza sativa subsp. japonica (Rice).